The following is a 243-amino-acid chain: NAD-dependent protein deacetylase (243 aa).

The Deacetylase sirtuin-type domain maps to 1-243; it reads MRNDLETLKH…VSVVKSLMTE (243 aa). NAD(+) contacts are provided by Ala-24, Phe-35, Arg-36, Gln-105, Ile-107, Asp-108, and His-123. A nicotinamide-binding site is contributed by Phe-35. Nicotinamide-binding residues include Ile-107 and Asp-108. The active-site Proton acceptor is His-123. Zn(2+)-binding residues include Cys-131, Cys-134, Cys-151, and Cys-154. Residues Ser-192, Ser-193, Asn-215, and Asp-232 each coordinate NAD(+).

Belongs to the sirtuin family. Class U subfamily. Zn(2+) is required as a cofactor.

The protein resides in the cytoplasm. It carries out the reaction N(6)-acetyl-L-lysyl-[protein] + NAD(+) + H2O = 2''-O-acetyl-ADP-D-ribose + nicotinamide + L-lysyl-[protein]. Functionally, NAD-dependent protein deacetylase which modulates the activities of several enzymes which are inactive in their acetylated form. This is NAD-dependent protein deacetylase from Staphylococcus aureus (strain Mu50 / ATCC 700699).